The chain runs to 135 residues: Large ribosomal subunit protein eL32 (135 aa).

A disordered region spans residues 51 to 77 (GRDNKFRLKMKGKPRPPEPGYRSPRKV).

This sequence belongs to the eukaryotic ribosomal protein eL32 family.

The polypeptide is Large ribosomal subunit protein eL32 (rpl32e) (Nanoarchaeum equitans (strain Kin4-M)).